The sequence spans 650 residues: NAC domain-containing protein 54 (650 aa).

In terms of domain architecture, NAC spans Leu-6–Lys-156. Residues Val-105–Lys-162 mediate DNA binding.

Expressed in leaves, roots and flowers.

It localises to the nucleus. Its function is as follows. Transcription factor that functions as a regulator of the jasmonate (JA) signaling pathway. May regulate the expression of genes encoding JA biosynthetic enzymes, such as lipoxygenase 7 (CM-LOX1), allene oxide synthase 2 (AOS2) and OPDA reductase 7 (OPR7). Involved in abscisic acid-induced leaf senescence. Activates the abscisic acid (ABA) signaling-associated gene ABI5 and the senescence-associated gene NYC1 by directly binding to the mitochondrial dysfunction motif (MDM) present in their promoters. Possesses transcriptional activator activity in yeast. Required for the multiplication of the rice dwarf virus (RDV). The polypeptide is NAC domain-containing protein 54 (Oryza sativa subsp. japonica (Rice)).